We begin with the raw amino-acid sequence, 346 residues long: Protein RecA (346 aa).

68 to 75 provides a ligand contact to ATP; the sequence is GPESSGKT.

It belongs to the RecA family.

It localises to the cytoplasm. Functionally, can catalyze the hydrolysis of ATP in the presence of single-stranded DNA, the ATP-dependent uptake of single-stranded DNA by duplex DNA, and the ATP-dependent hybridization of homologous single-stranded DNAs. It interacts with LexA causing its activation and leading to its autocatalytic cleavage. The protein is Protein RecA of Heliobacterium modesticaldum (strain ATCC 51547 / Ice1).